A 367-amino-acid polypeptide reads, in one-letter code: TATA-box-binding protein-like (367 aa).

The disordered stretch occupies residues 1–26 (MKKQSKTHKVDYKYYNSGSKTSRNRN). Residues 16–26 (NSGSKTSRNRN) show a composition bias toward polar residues.

It belongs to the TBP family.

The protein is TATA-box-binding protein-like of Acanthamoeba polyphaga (Amoeba).